The following is a 219-amino-acid chain: Ribosome maturation factor RimP (219 aa).

Disordered regions lie at residues 1 to 38 and 189 to 219; these read MTQR…LATR and VEFT…DEER. Positions 198–219 are enriched in acidic residues; that stretch reads DAFDGTDEAGDFDDDDVEDEER.

It belongs to the RimP family.

The protein localises to the cytoplasm. Required for maturation of 30S ribosomal subunits. This Salinispora arenicola (strain CNS-205) protein is Ribosome maturation factor RimP.